Consider the following 371-residue polypeptide: Probable inactive methyltransferase Os04g0175900 (371 aa).

Position 137–143 (137–143 (LDVDEDN)) interacts with substrate. The tract at residues 170 to 188 (LFEYMGTNHRFNMLFNQAM) is substrate binding. Gly-216, Asp-239, Met-260, and Lys-273 together coordinate S-adenosyl-L-methionine.

Belongs to the class I-like SAM-binding methyltransferase superfamily. Cation-independent O-methyltransferase family. COMT subfamily.

This is Probable inactive methyltransferase Os04g0175900 from Oryza sativa subsp. japonica (Rice).